The chain runs to 404 residues: Cysteine desulfurase IscS (404 aa).

Pyridoxal 5'-phosphate-binding positions include 75 to 76 (AT), Asn-155, Gln-183, and 203 to 205 (SGH). Residue Lys-206 is modified to N6-(pyridoxal phosphate)lysine. Pyridoxal 5'-phosphate is bound at residue Thr-243. Cys-328 serves as the catalytic Cysteine persulfide intermediate. Cys-328 contacts [2Fe-2S] cluster.

This sequence belongs to the class-V pyridoxal-phosphate-dependent aminotransferase family. NifS/IscS subfamily. Homodimer. Forms a heterotetramer with IscU, interacts with other sulfur acceptors. Pyridoxal 5'-phosphate serves as cofactor.

The protein resides in the cytoplasm. It carries out the reaction (sulfur carrier)-H + L-cysteine = (sulfur carrier)-SH + L-alanine. Its pathway is cofactor biosynthesis; iron-sulfur cluster biosynthesis. Its function is as follows. Master enzyme that delivers sulfur to a number of partners involved in Fe-S cluster assembly, tRNA modification or cofactor biosynthesis. Catalyzes the removal of elemental sulfur atoms from cysteine to produce alanine. Functions as a sulfur delivery protein for Fe-S cluster synthesis onto IscU, an Fe-S scaffold assembly protein, as well as other S acceptor proteins. The polypeptide is Cysteine desulfurase IscS (Shewanella oneidensis (strain ATCC 700550 / JCM 31522 / CIP 106686 / LMG 19005 / NCIMB 14063 / MR-1)).